A 226-amino-acid chain; its full sequence is Putative type II restriction enzyme MjaVIP (226 aa).

Belongs to the BsaWI type II restriction endonuclease family.

It catalyses the reaction Endonucleolytic cleavage of DNA to give specific double-stranded fragments with terminal 5'-phosphates.. A P subtype restriction enzyme that recognizes the double-stranded sequence 5'-CCGG-3'; the cleavage site is unknown. In Methanocaldococcus jannaschii (strain ATCC 43067 / DSM 2661 / JAL-1 / JCM 10045 / NBRC 100440) (Methanococcus jannaschii), this protein is Putative type II restriction enzyme MjaVIP (mjaVIRP).